Here is a 503-residue protein sequence, read N- to C-terminus: Cell wall integrity and stress response component 2 (503 aa).

An N-terminal signal peptide occupies residues 1–23; that stretch reads MHLDLIHKSFILVWLIYIRAALA. Topologically, residues 24–325 are extracellular; sequence DQFTYKACYS…KGLSGGAIAG (302 aa). One can recognise a WSC domain in the interval 25–118; that stretch reads QFTYKACYSA…SSAMNVYINN (94 aa). The disordered stretch occupies residues 124–260; the sequence is DSTSSTATST…STPSSTSIGT (137 aa). A helical transmembrane segment spans residues 326 to 346; that stretch reads VVVGVVCGTVALLALALFFFV. The Cytoplasmic segment spans residues 347–503; it reads WKKRRQSSQH…AKDSNNSSLR (157 aa). Phosphothreonine is present on Thr402. Ser455 and Ser458 each carry phosphoserine. The interval 470–503 is disordered; that stretch reads IVNPDNVSSNIGSNVSDGDDDYDDAKDSNNSSLR.

N-glycosylated.

It localises to the cell membrane. In Saccharomyces cerevisiae (strain ATCC 204508 / S288c) (Baker's yeast), this protein is Cell wall integrity and stress response component 2 (WSC2).